The primary structure comprises 460 residues: MEKVIPVKKNNDYEIYIDDFGNMGEGIGKIDNFTVFVKDAVKGEKVRAKIIKVNKSFAIGKLIDIIEKSQDRTEPVCSIYKKCGGCQLQHLKYTEQLEFKKNKVVECLKRIGKLDLSSVRINETIGMEDPYFYRNKVQLPVGETAGEAKIGFYRERSHEIIEVDKCFIQDDSANEIILLIKRWIKEFNIEGYNEYSGKGTLRHIMIRKAFKTGQIMLVLVTNTENVPHKKELIHMITTEIQGIKGIIQNINNKKTNVILGQREITLWGESTIEDYIGEFKFNISSKSFFQVNPIQTEKLYSAALKYAGLTGKEVVFDAYCGTGTISLFLSQNAKKVYGVEIIPEAIENAKINAKQNGIENTEFIVGKSEEEIPKLIEKGIAPEVVVVDPPRKGCEKSLLHSIAEASPKTIVYVSCDPATLSRDLGILSELGYEVNEVQPVDMFPMTGHVETIVLIKRVDK.

The TRAM domain occupies 6-64 (PVKKNNDYEIYIDDFGNMGEGIGKIDNFTVFVKDAVKGEKVRAKIIKVNKSFAIGKLID). [4Fe-4S] cluster-binding residues include Cys77, Cys83, Cys86, and Cys166. S-adenosyl-L-methionine is bound by residues Gln290, Tyr319, Glu340, and Asp388. The active-site Nucleophile is Cys415.

Belongs to the class I-like SAM-binding methyltransferase superfamily. RNA M5U methyltransferase family.

This is an uncharacterized protein from Clostridium acetobutylicum (strain ATCC 824 / DSM 792 / JCM 1419 / IAM 19013 / LMG 5710 / NBRC 13948 / NRRL B-527 / VKM B-1787 / 2291 / W).